The sequence spans 1271 residues: MGAQYSTELNKYNNNNNNNNNNNNNNNNNNNNHTISGNENLNNNNNNNNNNNNYNNNNNNNNNNNNNNNNNNNNNNNNNNNNNNNNKNNGNSNSNSNNNNNNNGINKYSNYFESLINNTNKDTNIPNNSNSNNNNSDRDFIQNMIKSANQIKPGEKELVLFHKLHQSLKENQSFSIEELRNSSILSISPDKSFLTNINEINVNNNNNNNNNNNENNKVGVNGSSTTTTTTTTTTTNNNSNNNNNNNNNNNNNNNNNNNNNEDDEDDYGDDDTIENNEPTFVDKPNKSAKLQKPKLKSNLNDTNGGNSPQQNGKISKYMAKKLLALQQKQLEQEQEQKQQQKQQQQQQQQQQQQQQQQQQQQQKDAIENINNNNNNKLQPIVKNSVNKTTKQKKNKTTTHNVKQQITFLTKSDNEDEYDASDEYIDDDDDDDEKYDDDDDEYFEGNNNNNYKKNNISNKSKNKNNNDESDSFSESEIFKQKKLNHDKNQSNPKQQLTSHSEFDNSLLNKNQSRTNSKIQKLQIKEENYHQIQQEHGEKQQQQQQQQQQPQQQQQQQQQQQQQQQQEMQVDKEQTEKIINTNKKEEQKPNDYFPPIPTNPFKRDNETAFGKNNENNNNNNNNNNNNNNNNNNNNNNNNNNYRNNKPNGEGFLSNLKIIPPMISSSPYYSKKSSNVVPTSPKSNLSDQQPPFSPVQISPQKQSPATTTTTTTTTTPTPLKKQKKNKTNNNINNNNINNNNNNNNNNNNNNNNNNNNNNNNNNYSINNINNEEDEENNSTQNNNNNNNNNNNSPQNSNTNSNNSNNSNNSNNISNIVSDGYQWRKYGQKNVKGSLHPRHYYKCTFQGCNVRKQVERIGDTNQNSTVYKGEHCHGFPQTTRVVSDQQAFRNSVMFEGLDGNNNNNNNNNNNNNNYSSNSNSNGNGNGNGNGNGNGNGNGNGNSNGNQDQNGNSFNDQNGDSPTQHGQISPMNSPKNTIPTTTTTTTSISTYVNTNSTNKKNNSKQEKKISVKNETTDDDEFQEDIDQLSNNNNNNNNNNNNNNNNNNNNNNNNNNNNNNNNNNNNNNNNNNNNDDNNNNNNNNNNNNNNNRFNGTSESKGSKKLVIETGSSIDHLDDGFFWRKYGQKSVKGSPFPKSYFKCAELTCPVKKQVIQQDSKYINTYRGKHNHDPPESEAIEKRKKHFNGLYNNNNNNNNNNNNNNNNNNNNNNINNINNNNINNLNSLNNINNINNNNNSNQINNFSGSIQNNLKNILKEQLKEAGKLHNEIENNLIDD.

Positions 1-12 are enriched in polar residues; it reads MGAQYSTELNKY. Disordered stretches follow at residues 1–138, 204–312, and 370–515; these read MGAQ…NSDR, NNNN…QQNG, and NNNN…RTNS. A coiled-coil region spans residues 9-71; that stretch reads LNKYNNNNNN…NNNNNNNNNN (63 aa). 4 stretches are compositionally biased toward low complexity: residues 13 to 103, 116 to 135, 204 to 216, and 223 to 259; these read NNNN…NNNN, INNT…NNNN, NNNN…NENN, and SSTT…NNNN. Acidic residues predominate over residues 260–274; it reads NEDDEDDYGDDDTIE. Over residues 297–312 the composition is skewed to polar residues; that stretch reads SNLNDTNGGNSPQQNG. Positions 320–372 form a coiled coil; the sequence is KKLLALQQKQLEQEQEQKQQQKQQQQQQQQQQQQQQQQQQQQQKDAIENINNN. A compositionally biased stretch (low complexity) spans 370 to 388; it reads NNNNNNKLQPIVKNSVNKT. Over residues 413–442 the composition is skewed to acidic residues; sequence NEDEYDASDEYIDDDDDDDEKYDDDDDEYF. The segment covering 443–458 has biased composition (low complexity); sequence EGNNNNNYKKNNISNK. The span at 475-487 shows a compositional bias: basic and acidic residues; that stretch reads EIFKQKKLNHDKN. The span at 488–515 shows a compositional bias: polar residues; that stretch reads QSNPKQQLTSHSEFDNSLLNKNQSRTNS. A coiled-coil region spans residues 520–574; the sequence is LQIKEENYHQIQQEHGEKQQQQQQQQQQPQQQQQQQQQQQQQQQQEMQVDKEQTE. Residues 578–587 show a composition bias toward basic and acidic residues; that stretch reads NTNKKEEQKP. Disordered stretches follow at residues 578-650 and 667-811; these read NTNK…EGFL and SKKS…NISN. Positions 610 to 642 are enriched in low complexity; that stretch reads NNENNNNNNNNNNNNNNNNNNNNNNNNNNYRNN. Over residues 672–702 the composition is skewed to polar residues; that stretch reads NVVPTSPKSNLSDQQPPFSPVQISPQKQSPA. Low complexity-rich tracts occupy residues 703–715, 725–766, and 774–811; these read TTTT…TPTP, NNNI…NNIN, and NSTQ…NISN. The stretch at 766-786 forms a coiled coil; it reads NNEEDEENNSTQNNNNNNNNN. A DNA-binding region (WRKY 1) is located at residues 808–872; it reads NISNIVSDGY…YKGEHCHGFP (65 aa). C839, C844, H867, and H869 together coordinate Zn(2+). Residues 890-1095 form a disordered region; it reads FEGLDGNNNN…RFNGTSESKG (206 aa). The segment covering 895–918 has biased composition (low complexity); it reads GNNNNNNNNNNNNNNYSSNSNSNG. A compositionally biased stretch (gly residues) spans 919 to 937; the sequence is NGNGNGNGNGNGNGNGNGN. Low complexity predominate over residues 938 to 956; the sequence is SNGNQDQNGNSFNDQNGDS. Residues 957–966 are compositionally biased toward polar residues; sequence PTQHGQISPM. Positions 967–995 are enriched in low complexity; sequence NSPKNTIPTTTTTTTSISTYVNTNSTNKK. Residues 998 to 1010 show a composition bias toward basic and acidic residues; it reads SKQEKKISVKNET. A compositionally biased stretch (acidic residues) spans 1011–1021; it reads TDDDEFQEDID. Positions 1013 to 1040 form a coiled coil; sequence DDEFQEDIDQLSNNNNNNNNNNNNNNNN. The segment covering 1025–1085 has biased composition (low complexity); it reads NNNNNNNNNN…NNNNNNNNNN (61 aa). Residues 1105–1167 constitute a DNA-binding region (WRKY 2); that stretch reads SSIDHLDDGF…YRGKHNHDPP (63 aa). Positions 1136, 1141, 1162, and 1164 each coordinate Zn(2+). Residues 1180-1210 form a disordered region; it reads NGLYNNNNNNNNNNNNNNNNNNNNNNINNIN. Over residues 1184 to 1210 the composition is skewed to low complexity; sequence NNNNNNNNNNNNNNNNNNNNNNINNIN.

This sequence belongs to the WRKY group I family.

The protein resides in the nucleus. Functionally, probable transcription factor. Interacts specifically with the W box (5'-(T)TGAC[CT]-3'), a frequently occurring elicitor-responsive cis-acting element. The sequence is that of Probable WRKY transcription factor protein 1 (wrky1) from Dictyostelium discoideum (Social amoeba).